The sequence spans 437 residues: Glutamyl-tRNA reductase (437 aa).

Substrate is bound by residues 49-52 (TCNR), Ser109, 114-116 (EGQ), and Gln120. Cys50 serves as the catalytic Nucleophile. Residue 198–203 (GAGRMS) coordinates NADP(+).

This sequence belongs to the glutamyl-tRNA reductase family. As to quaternary structure, homodimer.

The enzyme catalyses (S)-4-amino-5-oxopentanoate + tRNA(Glu) + NADP(+) = L-glutamyl-tRNA(Glu) + NADPH + H(+). Its pathway is porphyrin-containing compound metabolism; protoporphyrin-IX biosynthesis; 5-aminolevulinate from L-glutamyl-tRNA(Glu): step 1/2. It participates in porphyrin-containing compound metabolism; chlorophyll biosynthesis. Functionally, catalyzes the NADPH-dependent reduction of glutamyl-tRNA(Glu) to glutamate 1-semialdehyde (GSA). In Synechococcus sp. (strain CC9311), this protein is Glutamyl-tRNA reductase.